The following is a 501-amino-acid chain: Tegument protein US24 (501 aa).

The protein belongs to the herpesviridae US22 family.

Its subcellular location is the virion tegument. The chain is Tegument protein US24 (US24) from Human cytomegalovirus (strain Merlin) (HHV-5).